Here is a 319-residue protein sequence, read N- to C-terminus: Transcriptional regulator LsrR (319 aa).

A DNA-binding region (H-T-H motif) is located at residues 32–55; the sequence is QSEISERLGLTRLKVSRLLEKGHQ.

It belongs to the SorC transcriptional regulatory family.

It localises to the cytoplasm. Its activity is regulated as follows. Inactivated by phosphorylated autoinducer-2 (phospho-AI-2). Phospho-AI-2 acts by binding to LsrR, which is then unable to bind to the promoter regions, allowing the transcription of the target genes. In terms of biological role, transcriptional regulator that represses the expression of the lsr operon (lsrACDBFGE) in the absence of the quorum-sensing signaling molecule autoinducer 2 (AI-2). It also represses the expression of the lsrRK operon. Acts by binding to the intergenic region between the lsr operon and lsrR. In the presence of phosphorylated autoinducer-2 (phospho-AI-2), LsrR is inactivated, leading to the transcription of the genes. The regulatory function of LsrR was thought to be limited to the lsr operon, but it was subsequently shown to be involved, directly or indirectly, in the regulation of SPI-1 and flagella genes. It negatively regulates the expression of those genes, which reduces the ability of Salmonella to invade host cells. In Salmonella typhimurium (strain LT2 / SGSC1412 / ATCC 700720), this protein is Transcriptional regulator LsrR.